The chain runs to 563 residues: CTP synthase (563 aa).

The interval 1–280 is amidoligase domain; sequence MTKFVFVTGG…DEMICMKLQL (280 aa). Ser-13 lines the CTP pocket. Ser-13 is a UTP binding site. Residues 14 to 19 and Asp-71 contribute to the ATP site; that span reads SLGKGI. The Mg(2+) site is built by Asp-71 and Glu-154. CTP is bound by residues 161–163, 201–206, and Lys-237; these read DIE and KTKPTQ. UTP-binding positions include 201–206 and Lys-237; that span reads KTKPTQ. The Glutamine amidotransferase type-1 domain occupies 305–557; it reads TIAMAGKYTE…IAAALEHHAA (253 aa). Gly-366 is a binding site for L-glutamine. Cys-393 acts as the Nucleophile; for glutamine hydrolysis in catalysis. Residues 394 to 397, Glu-417, and Arg-483 contribute to the L-glutamine site; that span reads LGMQ. Residues His-530 and Glu-532 contribute to the active site.

It belongs to the CTP synthase family. Homotetramer.

It carries out the reaction UTP + L-glutamine + ATP + H2O = CTP + L-glutamate + ADP + phosphate + 2 H(+). The enzyme catalyses L-glutamine + H2O = L-glutamate + NH4(+). The catalysed reaction is UTP + NH4(+) + ATP = CTP + ADP + phosphate + 2 H(+). The protein operates within pyrimidine metabolism; CTP biosynthesis via de novo pathway; CTP from UDP: step 2/2. Its activity is regulated as follows. Allosterically activated by GTP, when glutamine is the substrate; GTP has no effect on the reaction when ammonia is the substrate. The allosteric effector GTP functions by stabilizing the protein conformation that binds the tetrahedral intermediate(s) formed during glutamine hydrolysis. Inhibited by the product CTP, via allosteric rather than competitive inhibition. Its function is as follows. Catalyzes the ATP-dependent amination of UTP to CTP with either L-glutamine or ammonia as the source of nitrogen. Regulates intracellular CTP levels through interactions with the four ribonucleotide triphosphates. This is CTP synthase from Leptothrix cholodnii (strain ATCC 51168 / LMG 8142 / SP-6) (Leptothrix discophora (strain SP-6)).